The following is a 218-amino-acid chain: 3,4-dihydroxy-2-butanone 4-phosphate synthase (218 aa).

D-ribulose 5-phosphate is bound by residues 37–38, aspartate 42, 150–154, and glutamate 174; these read RE and RSGHT. Residue glutamate 38 coordinates Mg(2+). Residue histidine 153 participates in Mg(2+) binding.

It belongs to the DHBP synthase family. As to quaternary structure, homodimer. It depends on Mg(2+) as a cofactor. Mn(2+) is required as a cofactor.

It carries out the reaction D-ribulose 5-phosphate = (2S)-2-hydroxy-3-oxobutyl phosphate + formate + H(+). It participates in cofactor biosynthesis; riboflavin biosynthesis; 2-hydroxy-3-oxobutyl phosphate from D-ribulose 5-phosphate: step 1/1. Functionally, catalyzes the conversion of D-ribulose 5-phosphate to formate and 3,4-dihydroxy-2-butanone 4-phosphate. In Hamiltonella defensa subsp. Acyrthosiphon pisum (strain 5AT), this protein is 3,4-dihydroxy-2-butanone 4-phosphate synthase.